Consider the following 388-residue polypeptide: Chitinase 4 (388 aa).

The GH18 domain maps to 22 to 375 (FKTCVYFSNW…KNFVDQLGGV (354 aa)). N-linked (GlcNAc...) asparagine glycans are attached at residues asparagine 30 and asparagine 82. Residues 82–83 (NQ) and 109–112 (GGWG) each bind chitin. N-linked (GlcNAc...) asparagine glycans are attached at residues asparagine 123 and asparagine 132. Glutamate 151 (proton donor) is an active-site residue. Tyrosine 152 is a chitin binding site. Asparagine 155 is a glycosylation site (N-linked (GlcNAc...) asparagine). Chitin is bound at residue 208 to 211 (MCYD). The N-linked (GlcNAc...) asparagine glycan is linked to asparagine 237. Tryptophan 350 is a chitin binding site.

The protein belongs to the glycosyl hydrolase 18 family. Chitinase class V subfamily.

It is found in the secreted. The enzyme catalyses Random endo-hydrolysis of N-acetyl-beta-D-glucosaminide (1-&gt;4)-beta-linkages in chitin and chitodextrins.. Its function is as follows. Chitinase involved in the remodeling of chitin in the fungal cell wall. Plays a role in sporulation. This is Chitinase 4 (CHT4) from Candida albicans (strain SC5314 / ATCC MYA-2876) (Yeast).